The sequence spans 514 residues: uncharacterized protein (514 aa).

Over residues 1–15 the composition is skewed to low complexity; the sequence is MSSPRGASSMSSRSP. The disordered stretch occupies residues 1–22; sequence MSSPRGASSMSSRSPVNLEPES.

This is an uncharacterized protein from Ictaluridae (bullhead catfishes).